Consider the following 147-residue polypeptide: Phospholipase A2 SSD387 (147 aa).

The signal sequence occupies residues 1-19; sequence MSPKFLLFSIIAVWSCAAA. A propeptide spanning residues 20-28 is cleaved from the precursor; the sequence is IEALFIQPR. 5 cysteine pairs are disulfide-bonded: Cys-55–Cys-71, Cys-70–Cys-130, Cys-77–Cys-123, Cys-86–Cys-116, and Cys-109–Cys-121. Residues Gly-56 and Gly-58 each coordinate Ca(2+). His-74 is an active-site residue. Asp-75 serves as a coordination point for Ca(2+). Asp-124 is an active-site residue.

Ca(2+) is required as a cofactor. In terms of tissue distribution, expressed by the venom gland.

It localises to the secreted. The enzyme catalyses a 1,2-diacyl-sn-glycero-3-phosphocholine + H2O = a 1-acyl-sn-glycero-3-phosphocholine + a fatty acid + H(+). PLA2 catalyzes the calcium-dependent hydrolysis of the 2-acyl groups in 3-sn-phosphoglycerides. The sequence is that of Phospholipase A2 SSD387 from Scolopendra dehaani (Thai centipede).